We begin with the raw amino-acid sequence, 188 residues long: Elongation factor P (188 aa).

This sequence belongs to the elongation factor P family.

Its subcellular location is the cytoplasm. It participates in protein biosynthesis; polypeptide chain elongation. Involved in peptide bond synthesis. Stimulates efficient translation and peptide-bond synthesis on native or reconstituted 70S ribosomes in vitro. Probably functions indirectly by altering the affinity of the ribosome for aminoacyl-tRNA, thus increasing their reactivity as acceptors for peptidyl transferase. This chain is Elongation factor P, found in Mycoplasma mobile (strain ATCC 43663 / 163K / NCTC 11711) (Mesomycoplasma mobile).